A 656-amino-acid polypeptide reads, in one-letter code: DNA ligase (656 aa).

Residues 32-36 (DAVYD) and 81-82 (SL) each bind NAD(+). The active-site N6-AMP-lysine intermediate is K112. 3 residues coordinate NAD(+): R133, E167, and K306. Zn(2+)-binding residues include C400, C403, C416, and C421. Positions 577-656 (KSSSVFSDKT…ELLKRLKELD (80 aa)) constitute a BRCT domain.

It belongs to the NAD-dependent DNA ligase family. LigA subfamily. It depends on Mg(2+) as a cofactor. The cofactor is Mn(2+).

It carries out the reaction NAD(+) + (deoxyribonucleotide)n-3'-hydroxyl + 5'-phospho-(deoxyribonucleotide)m = (deoxyribonucleotide)n+m + AMP + beta-nicotinamide D-nucleotide.. Its function is as follows. DNA ligase that catalyzes the formation of phosphodiester linkages between 5'-phosphoryl and 3'-hydroxyl groups in double-stranded DNA using NAD as a coenzyme and as the energy source for the reaction. It is essential for DNA replication and repair of damaged DNA. The protein is DNA ligase of Helicobacter pylori (strain J99 / ATCC 700824) (Campylobacter pylori J99).